Here is an 88-residue protein sequence, read N- to C-terminus: Acylphosphatase (88 aa).

Residues 3–88 (AARFIFTGVV…IPTTEAFVTG (86 aa)) enclose the Acylphosphatase-like domain. Catalysis depends on residues arginine 18 and asparagine 36.

The protein belongs to the acylphosphatase family.

It carries out the reaction an acyl phosphate + H2O = a carboxylate + phosphate + H(+). The sequence is that of Acylphosphatase (acyP) from Xanthomonas campestris pv. campestris (strain 8004).